The primary structure comprises 346 residues: Very-long-chain 3-oxoacyl-CoA reductase (346 aa).

A helical membrane pass occupies residues 26 to 46; the sequence is TASVLLVAGGWFVVSRVWTFL. Residues isoleucine 71, aspartate 126, aspartate 134, asparagine 153, tyrosine 220, lysine 224, isoleucine 253, and serine 255 each coordinate NADP(+). Tyrosine 220 functions as the Proton donor in the catalytic mechanism. Residue lysine 224 is the Lowers pKa of active site Tyr of the active site.

The protein belongs to the short-chain dehydrogenases/reductases (SDR) family.

Its subcellular location is the endoplasmic reticulum membrane. The catalysed reaction is a very-long-chain (3R)-3-hydroxyacyl-CoA + NADP(+) = a very-long-chain 3-oxoacyl-CoA + NADPH + H(+). It participates in lipid metabolism; fatty acid biosynthesis. In terms of biological role, component of the microsomal membrane bound fatty acid elongation system, which produces the 26-carbon very long-chain fatty acids (VLCFA) from palmitate. Catalyzes the reduction of the 3-ketoacyl-CoA intermediate that is formed in each cycle of fatty acid elongation. VLCFAs serve as precursors for ceramide and sphingolipids. This Emericella nidulans (strain FGSC A4 / ATCC 38163 / CBS 112.46 / NRRL 194 / M139) (Aspergillus nidulans) protein is Very-long-chain 3-oxoacyl-CoA reductase.